The sequence spans 1785 residues: MLPESVFLLLISHFLRAVTQPPFETEGVKQKLFHFSGHIDDFIVSRDQQTIYVASLNRLTSLSISNFSIQHEVSLGPVQDSPWCSADGKSCLKDNRPFPTDVRTKILQILPTNQILQCGSVKLGSCSTFNSKLSLITESTIAVAANSPDASTVSKIIDNRLIVAASATKESPYRDPFPAVAIRNLPGLNVENAGDLEGEAAVFLRAAYKNAFKFLYTFTHQHFVFVVAMVTPRESRLPMTTRLIRFCRNDTKFESYSEIELQCRGEDNTNYPFLNAIIQSYDKLIASFSTSSTSPKSSICVFSMQKVKLTFWYNVDRCRSGTDSIRLPHIGRDTKCVNKAHIPLDEDSCELGVGGSIELVEMSTKDIMGKVTSLMAVDQKAIFAGTTTSQIVMFKWDEHHSNQLEEYGRKEVGDGRTGSEVSKMVKFGDFVIVQMPYGIILEELSTCSHHSSCTECLVSVDPLCQWCHPTQSCTTSARCTSPVTSQCPIVDGDPIPSIVSVNSSTPISFNIHHLPPPVGFTYRCQFGTSTSSIKANWTTTGVSCPSEIFTSPNTFEILLLTSISNNPISRHNFTVYDCSGYGTCSSCMSSEYNCAWCSGLHKCSNSCGALEKSKACVKIQPMRLPIAIGSQQEIVLEASNLDTLDRRHEHFCKVNEQVSLAKIASDSIRCGKIQLTLSNTTSANMVVPLSLITRDSVIDIANVSLYSCTNLASDCSSCLALSPSLSCGWCNRQCSHECHESKATAVCDPPRIDKFEPTSGPIEGGTIIKIYGNDLGMSVEDVRGKIYVAGSRCNIVEYHVSNMIACQVDKGVSSGPIRISVGRATVAVAESSELYSFVRTSIFSAYPLYGPISGGTRITLYGQNLSSGSQTSVTVGGMPCPIERVNSSTVLTCLTPSGTRIGKSARVVVHVDHSQTQLDQPFEYRSDPSISSIFPMTSFKAGGRIVYVQGNSLNTVQTAKLFLISSPTPPFYIISDLAPCHIINSTLMTCMTPKILETITRRVEYTRQPVGFHMDNVTAVANLGRRIQMGIYPNPTLSPFKGVRYHQGEQSLILEGHNLNLAAEPNDFKIFIGNERCYVTLVDVRQLVCSGPVRQPKATDERGIPINGDNPLVTVIVGSLRMELGLIEYSDHALPSRLSLLILGLLLFIVVTLTVMCLVFKRRRQEREKEYRKIQLQMENLENNVRKECKQAFAELQTNLVLSPKSANSVNLGPELINFPHFVENLLWSDNNLTSAPSLARTLPVTLAQFHALLSFKGFIFTIVEAAESDVSISTSEKSMLASLLISVLLRNFSYCTEVVVDLLRAHIARSVQNKRAELLFRNSDSVVEKMFSKWMSICLYSHLTPQMNSYFYLYKALQYQTDKGPVDAVTGDARYTINEAKLLRESVDTKTLKIRVIPFEKCDESIDLEVHACDAICQVKQKVASAVYRETPYSQRPRITQFELKYKCPKRGDVKLTDVLPIETLSQKKLPVKLFTLADYGISDGCTLEMSPAVYTAESYRNSLADSGQSSWSSLDRCSPIYSSSKYYHLTNPSSGTMTFKKKSSNDSNLLPKSIPEVYLTRLLTSKGTVETYVEDFLESVLYMHDSSYPPILKFFFDILDREASVNGVSENICQQWKANGYVLRVWANFVRNPQLVFDVPHSISMDANLSTVAQTMMDCFSFSEPVLGAHSPSSRLLFAKDVARLRPLSVDLFKRVKNSPPLGMDELRTELVNMANDVSTCKGSSLALSELLSWVRGNGIRISQLLSSNEQFSQQRLPQKLSQVLHVCLETDNHIYSTISDYE.

The N-terminal stretch at 1–17 (MLPESVFLLLISHFLRA) is a signal peptide. One can recognise a Sema domain in the interval 18 to 444 (VTQPPFETEG…MPYGIILEEL (427 aa)). Topologically, residues 18–1139 (VTQPPFETEG…SDHALPSRLS (1122 aa)) are extracellular. Asn66 is a glycosylation site (N-linked (GlcNAc...) asparagine). Intrachain disulfides connect Cys84–Cys91, Cys118–Cys126, Cys247–Cys349, Cys263–Cys300, Cys318–Cys336, Cys447–Cys464, Cys453–Cys487, Cys456–Cys473, and Cys467–Cys479. The N-linked (GlcNAc...) asparagine glycan is linked to Asn249. The PSI 1 domain maps to 446–488 (TCSHHSSCTECLVSVDPLCQWCHPTQSCTTSARCTSPVTSQCP). Asn502, Asn536, and Asn572 each carry an N-linked (GlcNAc...) asparagine glycan. Cys524 and Cys544 are oxidised to a cystine. The 41-residue stretch at 577–617 (DCSGYGTCSSCMSSEYNCAWCSGLHKCSNSCGALEKSKACV) folds into the PSI 2 domain. N-linked (GlcNAc...) asparagine glycans are attached at residues Asn679 and Asn702. A PSI 3 domain is found at 707–748 (SCTNLASDCSSCLALSPSLSCGWCNRQCSHECHESKATAVCD). IPT/TIG domains lie at 750 to 837 (PRID…LYSF), 840 to 924 (TSIF…PFEY), and 928 to 1040 (PSIS…LSPF). N-linked (GlcNAc...) asparagine glycosylation is found at Asn864, Asn886, Asn984, and Asn1016. A helical transmembrane segment spans residues 1140 to 1160 (LLILGLLLFIVVTLTVMCLVF). The stretch at 1159-1197 (VFKRRRQEREKEYRKIQLQMENLENNVRKECKQAFAELQ) forms a coiled coil. Over 1161–1785 (KRRRQEREKE…HIYSTISDYE (625 aa)) the chain is Cytoplasmic.

This sequence belongs to the plexin family. As to quaternary structure, interacts with mab-20. As to expression, expressed predominantly in the central nervous system from embryonic to adult stages. Expressed in early embryos in ventral neuroblasts. Expressed in neurons and in a subset of posterior lateral and ventral epidermal cells following epidermal enclosure. Present in neurons, muscles and weakly expressed in epidermal cells of the larval tail.

The protein resides in the cell membrane. In terms of biological role, involved as a receptor for mab-20/sema-2a in the formation or stabilization of cell-cell contacts at several stages of epithelial morphogenesis. In early embryonic development, required for proper ventral closure of the epidermis. During male tail morphogenesis, involved in precursor cell sorting and in the formation of distinct sensory rays. Involved in axon guidance of SDQL neurons during neurogenesis. Probably in response to stimulation by mab-20, regulates fln-1-mediated remodeling of the actin cytoskeleton and thus axon guidance and/or fasciculation of DD/VD neurons. The chain is Plexin-2 from Caenorhabditis elegans.